The primary structure comprises 78 residues: Small ribosomal subunit protein uS17 (78 aa).

Belongs to the universal ribosomal protein uS17 family. In terms of assembly, part of the 30S ribosomal subunit.

In terms of biological role, one of the primary rRNA binding proteins, it binds specifically to the 5'-end of 16S ribosomal RNA. The sequence is that of Small ribosomal subunit protein uS17 from Parvibaculum lavamentivorans (strain DS-1 / DSM 13023 / NCIMB 13966).